Consider the following 259-residue polypeptide: Deoxyribose-phosphate aldolase (259 aa).

Catalysis depends on D102, which acts as the Proton donor/acceptor. The Schiff-base intermediate with acetaldehyde role is filled by K167. Catalysis depends on K201, which acts as the Proton donor/acceptor.

The protein belongs to the DeoC/FbaB aldolase family. DeoC type 2 subfamily.

Its subcellular location is the cytoplasm. The enzyme catalyses 2-deoxy-D-ribose 5-phosphate = D-glyceraldehyde 3-phosphate + acetaldehyde. Its pathway is carbohydrate degradation; 2-deoxy-D-ribose 1-phosphate degradation; D-glyceraldehyde 3-phosphate and acetaldehyde from 2-deoxy-alpha-D-ribose 1-phosphate: step 2/2. Catalyzes a reversible aldol reaction between acetaldehyde and D-glyceraldehyde 3-phosphate to generate 2-deoxy-D-ribose 5-phosphate. This is Deoxyribose-phosphate aldolase from Photorhabdus laumondii subsp. laumondii (strain DSM 15139 / CIP 105565 / TT01) (Photorhabdus luminescens subsp. laumondii).